Here is a 445-residue protein sequence, read N- to C-terminus: MGRRRRRLPREPFEIAITGLSHEGRGIAHHDERTLFVHGALPGERVRAVYTKRRRSVAEARVVEVVSPAPERIAPHCPHFGVCGGCSLQHLTPERQVELKQSVLMEQFHHMGGVQPERVLAPLTGAPWGYRRKARLAVKHVPRKGGVLVGFREKHSPFVAEMDRCPVLDPRVGERLTELGRLIEGLSIPDRVPQIEVALGDETGALVFRNLAPLTAADLNRLAGFARDSGLAVYQQPGNEATMALVHDPVGRRLDYALPGHGVRLGFRPGDFTQVNAEINRAMVDQALDLLAVEPGQRVLDLFCGLGNFTLPLARRASEVVGVEGAEALVERGRENALRNGLDNVRFYGADLTLAAADQPWATGGFDRVLLDPPRSGAFEVLGLVAALGPKRIVYVSCGPATLARDAGELVHRHGYRLTAAGVMDMFPHTAHVESMAVFQREAQD.

The region spanning R6–E64 is the TRAM domain. [4Fe-4S] cluster is bound by residues C77, C83, C86, and C165. The S-adenosyl-L-methionine site is built by Q274, F303, N308, E324, D351, and D372. The active-site Nucleophile is the C398.

Belongs to the class I-like SAM-binding methyltransferase superfamily. RNA M5U methyltransferase family. RlmD subfamily.

The enzyme catalyses uridine(1939) in 23S rRNA + S-adenosyl-L-methionine = 5-methyluridine(1939) in 23S rRNA + S-adenosyl-L-homocysteine + H(+). Its function is as follows. Catalyzes the formation of 5-methyl-uridine at position 1939 (m5U1939) in 23S rRNA. In Alkalilimnicola ehrlichii (strain ATCC BAA-1101 / DSM 17681 / MLHE-1), this protein is 23S rRNA (uracil(1939)-C(5))-methyltransferase RlmD.